The primary structure comprises 150 residues: Large ribosomal subunit protein uL11 (150 aa).

Belongs to the universal ribosomal protein uL11 family. As to quaternary structure, part of the ribosomal stalk of the 50S ribosomal subunit. Interacts with L10 and the large rRNA to form the base of the stalk. L10 forms an elongated spine to which L12 dimers bind in a sequential fashion forming a multimeric L10(L12)X complex. Post-translationally, one or more lysine residues are methylated.

Its function is as follows. Forms part of the ribosomal stalk which helps the ribosome interact with GTP-bound translation factors. The protein is Large ribosomal subunit protein uL11 of Cereibacter sphaeroides (strain KD131 / KCTC 12085) (Rhodobacter sphaeroides).